A 142-amino-acid polypeptide reads, in one-letter code: Peptide methionine sulfoxide reductase MsrB (142 aa).

Residues 3-126 (KEKLKKKLSL…NSAALRFVPF (124 aa)) enclose the MsrB domain. Cys115 serves as the catalytic Nucleophile.

It belongs to the MsrB Met sulfoxide reductase family.

The enzyme catalyses L-methionyl-[protein] + [thioredoxin]-disulfide + H2O = L-methionyl-(R)-S-oxide-[protein] + [thioredoxin]-dithiol. This Lactococcus lactis subsp. lactis (strain IL1403) (Streptococcus lactis) protein is Peptide methionine sulfoxide reductase MsrB.